We begin with the raw amino-acid sequence, 253 residues long: Transcriptional regulatory protein TcrA (253 aa).

In terms of domain architecture, Response regulatory spans 24-138 (RILVVEDEPK…ELFARLRALS (115 aa)). Aspartate 73 carries the 4-aspartylphosphate modification. A DNA-binding region (ompR/PhoB-type) is located at residues 146 to 244 (PPTLEAGDLR…IRGAGYRLRK (99 aa)).

Interacts with HK2. Phosphorylated by HK2.

It localises to the cytoplasm. Functionally, member of the three-protein two-component system HK1/HK2/TcrA. In Mycobacterium tuberculosis (strain ATCC 25618 / H37Rv), this protein is Transcriptional regulatory protein TcrA (tcrA).